The following is a 756-amino-acid chain: 5-methyltetrahydropteroyltriglutamate--homocysteine methyltransferase (756 aa).

5-methyltetrahydropteroyltri-L-glutamate contacts are provided by residues Arg-15 to Lys-18 and Lys-111. The disordered stretch occupies residues Gly-392–Arg-411. Residues Leu-399–Arg-411 show a composition bias toward basic and acidic residues. Residues Ile-429–Ser-431 and Glu-482 each bind L-homocysteine. L-methionine-binding positions include Ile-429–Ser-431 and Glu-482. 5-methyltetrahydropteroyltri-L-glutamate-binding positions include Arg-513–Cys-514 and Trp-559. Position 597 (Asp-597) interacts with L-homocysteine. Asp-597 provides a ligand contact to L-methionine. 5-methyltetrahydropteroyltri-L-glutamate is bound at residue Glu-603. 3 residues coordinate Zn(2+): His-639, Cys-641, and Glu-663. His-692 acts as the Proton donor in catalysis. Cys-724 contacts Zn(2+).

The protein belongs to the vitamin-B12 independent methionine synthase family. Zn(2+) serves as cofactor.

It catalyses the reaction 5-methyltetrahydropteroyltri-L-glutamate + L-homocysteine = tetrahydropteroyltri-L-glutamate + L-methionine. Its pathway is amino-acid biosynthesis; L-methionine biosynthesis via de novo pathway; L-methionine from L-homocysteine (MetE route): step 1/1. Catalyzes the transfer of a methyl group from 5-methyltetrahydrofolate to homocysteine resulting in methionine formation. This Halalkalibacterium halodurans (strain ATCC BAA-125 / DSM 18197 / FERM 7344 / JCM 9153 / C-125) (Bacillus halodurans) protein is 5-methyltetrahydropteroyltriglutamate--homocysteine methyltransferase.